Consider the following 143-residue polypeptide: Small ribosomal subunit protein uS11c (143 aa).

This sequence belongs to the universal ribosomal protein uS11 family. In terms of assembly, part of the 30S ribosomal subunit.

It localises to the plastid. It is found in the chloroplast. This is Small ribosomal subunit protein uS11c from Saccharum officinarum (Sugarcane).